A 923-amino-acid polypeptide reads, in one-letter code: DNA gyrase subunit A (923 aa).

Residues 34 to 534 (LPDARDGLKP…SQVDLTIADL (501 aa)) enclose the Topo IIA-type catalytic domain. Y122 serves as the catalytic O-(5'-phospho-DNA)-tyrosine intermediate. The GyrA-box motif lies at 561–567 (QRRGGKG). The disordered stretch occupies residues 881–923 (ERVQEPSGGDDEDLPEGEEAAESLGESAESESEPAAEAEGNEE). Acidic residues-rich tracts occupy residues 888–901 (GGDDEDLPEGEEAA) and 908–923 (AESESEPAAEAEGNEE).

Belongs to the type II topoisomerase GyrA/ParC subunit family. In terms of assembly, heterotetramer, composed of two GyrA and two GyrB chains. In the heterotetramer, GyrA contains the active site tyrosine that forms a transient covalent intermediate with DNA, while GyrB binds cofactors and catalyzes ATP hydrolysis.

It is found in the cytoplasm. The enzyme catalyses ATP-dependent breakage, passage and rejoining of double-stranded DNA.. In terms of biological role, a type II topoisomerase that negatively supercoils closed circular double-stranded (ds) DNA in an ATP-dependent manner to modulate DNA topology and maintain chromosomes in an underwound state. Negative supercoiling favors strand separation, and DNA replication, transcription, recombination and repair, all of which involve strand separation. Also able to catalyze the interconversion of other topological isomers of dsDNA rings, including catenanes and knotted rings. Type II topoisomerases break and join 2 DNA strands simultaneously in an ATP-dependent manner. This Pseudomonas aeruginosa (strain ATCC 15692 / DSM 22644 / CIP 104116 / JCM 14847 / LMG 12228 / 1C / PRS 101 / PAO1) protein is DNA gyrase subunit A.